A 254-amino-acid chain; its full sequence is MQNAIATIKETNPIVLTVANNVTPADVANGLNALGASPMMSQTPEEADDMVNIAQAAAINLGTLNPHQRGEMEAVMEAAKKYHKPTVLDPVACGATMYRLRVVTELLHQYHFTVIRGNAGEIATLAGVEWQSHGIDAGEGNADLEKVARLAAEKLGSVIVLSGEVDIVTDSTRLARLPYGSPAFKTHVGTGDMLSSLIGAFLATNDDAFDAAVDAVTTFTLCGQAVEDQRPGNWYPGLLNNLDAVTDQQLAAWQ.

M40 contributes to the substrate binding site. The ATP site is built by R116 and S162. Substrate is bound at residue G189.

The protein belongs to the Thz kinase family. Requires Mg(2+) as cofactor.

The catalysed reaction is 5-(2-hydroxyethyl)-4-methylthiazole + ATP = 4-methyl-5-(2-phosphooxyethyl)-thiazole + ADP + H(+). It participates in cofactor biosynthesis; thiamine diphosphate biosynthesis; 4-methyl-5-(2-phosphoethyl)-thiazole from 5-(2-hydroxyethyl)-4-methylthiazole: step 1/1. Its function is as follows. Catalyzes the phosphorylation of the hydroxyl group of 4-methyl-5-beta-hydroxyethylthiazole (THZ). This Limosilactobacillus fermentum (strain NBRC 3956 / LMG 18251) (Lactobacillus fermentum) protein is Hydroxyethylthiazole kinase.